Reading from the N-terminus, the 146-residue chain is Leghemoglobin Lb120-29 (146 aa).

Residues 2 to 146 (GFTDKQEALV…LASAIKKAMS (145 aa)) enclose the Globin domain. Nitrated tyrosine occurs at positions 24 and 29. A heme b-binding site is contributed by Ser-44. A Phosphoserine modification is found at Ser-44. Position 61 (His-61) interacts with O2. Heme b is bound by residues Lys-64, His-93, and Lys-96. The residue at position 134 (Tyr-134) is a Nitrated tyrosine.

The protein belongs to the plant globin family. Monomer. In terms of processing, nitrated in effective nodules and particularly in hypoxic conditions; this mechanism may play a protective role in the symbiosis by buffering toxic peroxynitrite NO(2)(-). Nitration level decrease during nodule senescence. Post-translationally, phosphorylation at Ser-44 disrupts the molecular environment of its porphyrin ring oxygen binding pocket, thus leading to a reduced oxygen consumption and to the delivery of oxygen O(2) to symbiosomes. Root nodules.

The protein localises to the cytoplasm. It localises to the cytosol. Its subcellular location is the nucleus. Functionally, leghemoglobin that reversibly binds oxygen O(2) through a pentacoordinated heme iron. In root nodules, facilitates the diffusion of oxygen to the bacteroids while preventing the bacterial nitrogenase from being inactivated by buffering dioxygen, nitric oxide and carbon monoxide, and promoting the formation of reactive oxygen species (ROS, e.g. H(2)O(2)). This role is essential for symbiotic nitrogen fixation (SNF). The polypeptide is Leghemoglobin Lb120-29 (Pisum sativum (Garden pea)).